The primary structure comprises 260 residues: UPF0246 protein BceJ2315_22780 (260 aa).

This sequence belongs to the UPF0246 family.

This chain is UPF0246 protein BceJ2315_22780, found in Burkholderia cenocepacia (strain ATCC BAA-245 / DSM 16553 / LMG 16656 / NCTC 13227 / J2315 / CF5610) (Burkholderia cepacia (strain J2315)).